Consider the following 93-residue polypeptide: Long neurotoxin 1 (93 aa).

A signal peptide spans 1-21 (MKTLLLTLVVVTIVCLDLGNS). Disulfide bonds link Cys24-Cys42, Cys35-Cys63, Cys48-Cys52, Cys67-Cys78, and Cys79-Cys84.

This sequence belongs to the three-finger toxin family. Long-chain subfamily. Type II alpha-neurotoxin sub-subfamily. In terms of tissue distribution, expressed by the venom gland.

It is found in the secreted. Functionally, binds with high affinity to muscular (alpha-1/CHRNA1) and neuronal (alpha-7/CHRNA7) nicotinic acetylcholine receptor (nAChR) and inhibits acetylcholine from binding to the receptor, thereby impairing neuromuscular and neuronal transmission. This is Long neurotoxin 1 from Tropidechis carinatus (Australian rough-scaled snake).